A 295-amino-acid polypeptide reads, in one-letter code: CRISPR-associated endonuclease Cas1 2 (295 aa).

Residues E155, H215, and E230 each coordinate Mn(2+).

This sequence belongs to the CRISPR-associated endonuclease Cas1 family. As to quaternary structure, homodimer, forms a heterotetramer with a Cas2 homodimer. It depends on Mg(2+) as a cofactor. Mn(2+) is required as a cofactor.

Its function is as follows. CRISPR (clustered regularly interspaced short palindromic repeat), is an adaptive immune system that provides protection against mobile genetic elements (viruses, transposable elements and conjugative plasmids). CRISPR clusters contain spacers, sequences complementary to antecedent mobile elements, and target invading nucleic acids. CRISPR clusters are transcribed and processed into CRISPR RNA (crRNA). Acts as a dsDNA endonuclease. Involved in the integration of spacer DNA into the CRISPR cassette. This is CRISPR-associated endonuclease Cas1 2 from Pyrobaculum aerophilum (strain ATCC 51768 / DSM 7523 / JCM 9630 / CIP 104966 / NBRC 100827 / IM2).